We begin with the raw amino-acid sequence, 389 residues long: Putative zinc finger CCCH domain-containing protein 10 (389 aa).

Residues 1-11 (MANVSFTFDSQ) are compositionally biased toward polar residues. Residues 1-110 (MANVSFTFDS…QDRRGSESRM (110 aa)) form a disordered region. Composition is skewed to basic and acidic residues over residues 12–52 (EQNK…RVSE) and 86–110 (RSHE…ESRM). 2 C3H1-type zinc fingers span residues 131-157 (RPGE…YNHP) and 158-190 (PLQE…HPKE). The segment at 183–296 (CPFNHPKERD…ATATGKVSGK (114 aa)) is disordered. 2 stretches are compositionally biased toward basic and acidic residues: residues 204-243 (PDLR…KEDA) and 251-284 (RPRD…RSSR).

This chain is Putative zinc finger CCCH domain-containing protein 10, found in Arabidopsis thaliana (Mouse-ear cress).